A 292-amino-acid polypeptide reads, in one-letter code: Elongation factor Ts (292 aa).

The interval 82–85 (TDFV) is involved in Mg(2+) ion dislocation from EF-Tu.

This sequence belongs to the EF-Ts family.

The protein resides in the cytoplasm. Associates with the EF-Tu.GDP complex and induces the exchange of GDP to GTP. It remains bound to the aminoacyl-tRNA.EF-Tu.GTP complex up to the GTP hydrolysis stage on the ribosome. This is Elongation factor Ts from Legionella pneumophila subsp. pneumophila (strain Philadelphia 1 / ATCC 33152 / DSM 7513).